Consider the following 341-residue polypeptide: Protein YIPF3 (341 aa).

Over 1 to 146 (MANSSGSSRN…PVKMISFPQK (146 aa)) the chain is Cytoplasmic. Positions 26 to 46 (GGGAAVIDMENMDDTSGSSFE) are disordered. The helical transmembrane segment at 147–167 (IAGELYGPLMLVFTMVAILLH) threads the bilayer. The Lumenal segment spans residues 168–185 (GMKSSGTIIREGTLMGTA). A helical membrane pass occupies residues 186–206 (IGTCFGYWLGVSSFIYFLAYL). The Cytoplasmic segment spans residues 207–212 (CNAQIT). Residues 213–233 (MLQTLSLLGYGLFGHCIVLFI) form a helical membrane-spanning segment. The Lumenal portion of the chain corresponds to 234 to 242 (TYNIHFHSL). Residues 243 to 263 (FYIFWLCIGGLSTLRMVAVLL) form a helical membrane-spanning segment. Residues 264–272 (SRTVGHTQR) are Cytoplasmic-facing. The chain crosses the membrane as a helical span at residues 273 to 293 (LIVCGTMAALHMLFLLYLHFA). The Lumenal segment spans residues 294-341 (YHKVVEGILDTLDGQNVPLPIQRVARDLPVGPNTVLNATVQVLLAHSR). Asparagine 330 carries an N-linked (GlcNAc...) asparagine glycan.

Belongs to the YIP1 family.

The protein resides in the cell membrane. It is found in the golgi apparatus. The protein localises to the cis-Golgi network membrane. Its subcellular location is the cytoplasm. Its function is as follows. Involved in the maintenance of the Golgi structure. May play a role in hematopoiesis. The sequence is that of Protein YIPF3 (yipf3) from Xenopus laevis (African clawed frog).